A 203-amino-acid chain; its full sequence is NADH-quinone oxidoreductase subunit C (203 aa).

Belongs to the complex I 30 kDa subunit family. NDH-1 is composed of 14 different subunits. Subunits NuoB, C, D, E, F, and G constitute the peripheral sector of the complex.

It localises to the cell inner membrane. The catalysed reaction is a quinone + NADH + 5 H(+)(in) = a quinol + NAD(+) + 4 H(+)(out). NDH-1 shuttles electrons from NADH, via FMN and iron-sulfur (Fe-S) centers, to quinones in the respiratory chain. The immediate electron acceptor for the enzyme in this species is believed to be ubiquinone. Couples the redox reaction to proton translocation (for every two electrons transferred, four hydrogen ions are translocated across the cytoplasmic membrane), and thus conserves the redox energy in a proton gradient. This is NADH-quinone oxidoreductase subunit C from Verminephrobacter eiseniae (strain EF01-2).